A 583-amino-acid polypeptide reads, in one-letter code: L-arabonate dehydratase (583 aa).

[4Fe-4S] cluster is bound by residues Cys-56, Cys-124, and Cys-197.

The protein belongs to the IlvD/Edd family. Homodimer. The cofactor is [4Fe-4S] cluster.

It catalyses the reaction L-arabinonate = 2-dehydro-3-deoxy-L-arabinonate + H2O. Its activity is regulated as follows. Activity is enhanced by Mg(2+), being optimal with a concentration of 1-10 mM Mg(2+). Functionally, catalyzes the dehydration of L-arabonate to L-2-keto-3-deoxyarabonate (L-KDA). Is involved in a degradation pathway of L-arabinose that allows A.brasilense to grow on L-arabinose as a sole carbon source. To a lesser extent, can also use D-xylonate as substrate, but not D-galactonate, D-arabonate, and D-gluconate. The polypeptide is L-arabonate dehydratase (araC) (Azospirillum brasilense).